We begin with the raw amino-acid sequence, 363 residues long: Phosphoserine aminotransferase (363 aa).

Arg-41 lines the L-glutamate pocket. Pyridoxal 5'-phosphate contacts are provided by residues 75 to 76, Trp-100, Thr-155, Asp-175, and Gln-198; that span reads AS. An N6-(pyridoxal phosphate)lysine modification is found at Lys-199. 239–240 contacts pyridoxal 5'-phosphate; the sequence is NT.

The protein belongs to the class-V pyridoxal-phosphate-dependent aminotransferase family. SerC subfamily. As to quaternary structure, homodimer. The cofactor is pyridoxal 5'-phosphate.

The protein localises to the cytoplasm. The enzyme catalyses O-phospho-L-serine + 2-oxoglutarate = 3-phosphooxypyruvate + L-glutamate. It catalyses the reaction 4-(phosphooxy)-L-threonine + 2-oxoglutarate = (R)-3-hydroxy-2-oxo-4-phosphooxybutanoate + L-glutamate. The protein operates within amino-acid biosynthesis; L-serine biosynthesis; L-serine from 3-phospho-D-glycerate: step 2/3. Catalyzes the reversible conversion of 3-phosphohydroxypyruvate to phosphoserine and of 3-hydroxy-2-oxo-4-phosphonooxybutanoate to phosphohydroxythreonine. The sequence is that of Phosphoserine aminotransferase from Streptococcus agalactiae serotype III (strain NEM316).